The chain runs to 316 residues: MFQHITVLLEEAVDGLAIKPGGIYVDCTLGGAGHSERIVSQLSGGGRLIAFDQDDAALDNARVRLAPYMDRVTLVKSNFRYLEEMLLTCDVPTVDGVPQVDGILFDLGVSSPQLDEAERGFSYNHDAPLDMRMDQGGALTAYDIVNSWEEREISRILHVYGEEKFARSIARKIVQARENAPIETTGELAELVKTGIPAAARRTGGHPAKRSFQALRIAVNDELGAEEDALEEAVKCIRPGGRISVITFHSLEDRICKQLFASYVEKCTCPPDFPKCVCGGTGKLRLVNRKPIVPTEQELEVNPRSRSAKLRVAEKL.

Residues 32-34, D52, F79, D106, and Q113 each bind S-adenosyl-L-methionine; that span reads AGH.

Belongs to the methyltransferase superfamily. RsmH family.

It localises to the cytoplasm. It carries out the reaction cytidine(1402) in 16S rRNA + S-adenosyl-L-methionine = N(4)-methylcytidine(1402) in 16S rRNA + S-adenosyl-L-homocysteine + H(+). In terms of biological role, specifically methylates the N4 position of cytidine in position 1402 (C1402) of 16S rRNA. The sequence is that of Ribosomal RNA small subunit methyltransferase H from Paenibacillus sp. (strain JDR-2).